We begin with the raw amino-acid sequence, 318 residues long: MELLEGSRRSDAMAVLRDACENWGFFELLNHGISHEPNEQSETVNKEHYREHYRRFREQRFKEFAAKTLDSGENVDGDNLDWESTFFLRHLPTSNISQVPDLDEDCGSTMKEFALGLEKLAERLLDLLCENLGLEKGYLKRVFCGGSDGLPTFGTKVSNYPPCPKPELIKGLRAHTDAGGIILLFQDDTVSGLQLLKDEEWIDVPPMRHSIVVNIGDQLEVITNGKYKSVMHRVVAQTNGNRMSIASFYNPGSDAVIFPAPELVEKEAAEKKKETYPKFVFEDYMKLYVRQKFEAKEPRFEAMKTMDAVISSQPIPTA.

The Fe2OG dioxygenase domain occupies 151 to 251 (PTFGTKVSNY…RMSIASFYNP (101 aa)). Fe cation contacts are provided by His175, Asp177, and His232.

This sequence belongs to the iron/ascorbate-dependent oxidoreductase family. Fe cation serves as cofactor.

It catalyses the reaction 1-aminocyclopropane-1-carboxylate + L-ascorbate + O2 = ethene + L-dehydroascorbate + hydrogen cyanide + CO2 + 2 H2O. The protein operates within alkene biosynthesis; ethylene biosynthesis via S-adenosyl-L-methionine; ethylene from S-adenosyl-L-methionine: step 2/2. This Dendrobium crumenatum (Tropical pigeon orchid) protein is 1-aminocyclopropane-1-carboxylate oxidase (ACO).